The primary structure comprises 300 residues: uncharacterized protein (300 aa).

The first 20 residues, 1–20 (MRLLISCILILSILVNFISG), serve as a signal peptide directing secretion. Over 21-279 (HAVLVAPTPF…PCSIYGDGNG (259 aa)) the chain is Extracellular. Residues N56, N217, and N278 are each glycosylated (N-linked (GlcNAc...) asparagine). The helical transmembrane segment at 280–300 (SNLIIIPTLLIISILSLILMF) threads the bilayer.

It is found in the membrane. This is an uncharacterized protein from Dictyostelium discoideum (Social amoeba).